The primary structure comprises 146 residues: P antigen family member 1 (146 aa).

Positions 16–146 (YVESSEESSD…PEEDEGQSQP (131 aa)) are disordered. Residues 19–32 (SSEESSDEQPDEVE) show a composition bias toward acidic residues. Phosphoserine is present on Ser-63. Residues 79 to 92 (PDTKRVCLRNEEQM) are compositionally biased toward basic and acidic residues. The residue at position 105 (Ser-105) is a Phosphoserine. Positions 107–120 (EQVHPKTGCERGDG) are enriched in basic and acidic residues. Ser-144 bears the Phosphoserine mark.

Belongs to the GAGE family. Isolated from prostate cancer cell lines; expression associated with progression to androgen insensitive phenotype. Expressed in normal testis and at lower level in normal placenta.

In Homo sapiens (Human), this protein is P antigen family member 1 (PAGE1).